Here is a 183-residue protein sequence, read N- to C-terminus: TATA-box-binding protein (183 aa).

2 repeat units span residues 7 to 83 (IENV…ARTL) and 99 to 177 (VQNI…RQQL).

Belongs to the TBP family.

Functionally, general factor that plays a role in the activation of archaeal genes transcribed by RNA polymerase. Binds specifically to the TATA box promoter element which lies close to the position of transcription initiation. This is TATA-box-binding protein from Methanothrix thermoacetophila (strain DSM 6194 / JCM 14653 / NBRC 101360 / PT) (Methanosaeta thermophila).